The chain runs to 377 residues: MKIDYYEALGVERTADDKVLKTAFRKLAMEYHPDRNPNNPEAERKFKEIGEAYETLKDPQKRAAYDRFGHAAFENGGMGGGFGNGFGGSGGFADIFEDIFGEMMGGGRRRSNGGRERGADLRYNMEVTLEEAYAGKTAQIRVPTSITCDECSGSGAKAGSQPTTCTMCSGSGRVRAAQGFFSVERTCPTCNGRGQIIKDPCGKCHGQGRVTQERSLSVNIPAGIEDGTRIRLSGEGEAGMRGGPSGDLYIFLSVKPHEFFQRDGSDLYCKVPISMTTAALGGQFEVSTLDGTQTRVKVPDGTQNGKQFRLKGKGMPVLRQAAVGDLYIQIDIETPQNLSKRQRELLEEFEKLSSQENSPKSAGFFSRMKEFFEGIGE.

Residues 4–69 (DYYEALGVER…QKRAAYDRFG (66 aa)) enclose the J domain. The segment at 135–213 (GKTAQIRVPT…CHGQGRVTQE (79 aa)) adopts a CR-type zinc-finger fold. Positions 148, 151, 165, 168, 187, 190, 201, and 204 each coordinate Zn(2+). CXXCXGXG motif repeat units lie at residues 148–155 (CDECSGSG), 165–172 (CTMCSGSG), 187–194 (CPTCNGRG), and 201–208 (CGKCHGQG).

Belongs to the DnaJ family. In terms of assembly, homodimer. The cofactor is Zn(2+).

The protein localises to the cytoplasm. Its function is as follows. Participates actively in the response to hyperosmotic and heat shock by preventing the aggregation of stress-denatured proteins and by disaggregating proteins, also in an autonomous, DnaK-independent fashion. Unfolded proteins bind initially to DnaJ; upon interaction with the DnaJ-bound protein, DnaK hydrolyzes its bound ATP, resulting in the formation of a stable complex. GrpE releases ADP from DnaK; ATP binding to DnaK triggers the release of the substrate protein, thus completing the reaction cycle. Several rounds of ATP-dependent interactions between DnaJ, DnaK and GrpE are required for fully efficient folding. Also involved, together with DnaK and GrpE, in the DNA replication of plasmids through activation of initiation proteins. This chain is Chaperone protein DnaJ, found in Brucella anthropi (strain ATCC 49188 / DSM 6882 / CCUG 24695 / JCM 21032 / LMG 3331 / NBRC 15819 / NCTC 12168 / Alc 37) (Ochrobactrum anthropi).